A 345-amino-acid polypeptide reads, in one-letter code: 3'-5' exoribonuclease 1 (345 aa).

Basic and acidic residues-rich tracts occupy residues 1–11 (MEDERGRERGG) and 19–46 (PRPE…ETDG). Positions 1–50 (MEDERGRERGGDAAQQKTPRPECEESRPLSVEKKQRCRLDGKETDGSKFI) are disordered. Phosphoserine is present on residues S55 and S58. Residues 72–106 (INRMSKEELRAKLSEFKLETRGVKDVLKKRLKNYY) enclose the SAP domain. Residues 126-302 (ICIIDFEATC…DDSKNIARIA (177 aa)) form the Exonuclease domain. Mg(2+)-binding residues include D130 and E132. E132 functions as the Proton acceptor in the catalytic mechanism. 2 residues coordinate AMP: E132 and A133. Mg(2+) is bound at residue D230. The active-site Proton acceptor is the H289. AMP is bound at residue H289. Position 294 (D294) interacts with Mg(2+).

Identified in a histone pre-mRNA complex, at least composed of ERI1, LSM11, SLBP, SNRPB, SYNCRIP and YBX1. Binds to 40S and 60S ribosomal subunits and to 80S assembled ribosomes. Interacts in a cooperative manner with SLBP to the mature 3'-end of histone mRNAs. Found in a ternary complex with SLBP and the stem-loop structure of the 3'-end of histone mRNAs. The cofactor is Mg(2+). In terms of tissue distribution, widely expressed with high levels in spleen, thymus and testis (at protein level).

Its subcellular location is the cytoplasm. The protein resides in the nucleus. It localises to the nucleolus. It catalyses the reaction Exonucleolytic cleavage in the 3'- to 5'-direction to yield nucleoside 5'-phosphates.. Although it can bind simultaneously with SLBP to the 3'-end of histone mRNA, the presence of SLBP prevents the exonuclease activity. Its function is as follows. RNA exonuclease that binds to the 3'-end of histone mRNAs and degrades them, suggesting that it plays an essential role in histone mRNA decay after replication. A 2' and 3'-hydroxyl groups at the last nucleotide of the histone 3'-end is required for efficient 3'-end histone mRNA exonuclease activity and degradation of RNA substrates. Also able to degrade the 3'-overhangs of short interfering RNAs (siRNAs) in vitro, suggesting a possible role as regulator of RNA interference (RNAi). Required for binding the 5'-ACCCA-3' sequence present in stem-loop structure. Able to bind other mRNAs. Required for 5.8S rRNA 3'-end processing. Also binds to 5.8s ribosomal RNA. Binds with high affinity to the stem-loop structure of replication-dependent histone pre-mRNAs. In vitro, does not have sequence specificity. In vitro, has weak DNA exonuclease activity. In vitro, shows biphasic kinetics such that there is rapid hydrolysis of the last three unpaired RNA nucleotides in the 39 flanking sequence followed by a much slower cleavage through the stem that occurs over a longer incubation period in the order of hours. ERI1-mediated RNA metabolism plays a key role in chondrogenesis. This chain is 3'-5' exoribonuclease 1 (Eri1), found in Mus musculus (Mouse).